Here is a 217-residue protein sequence, read N- to C-terminus: Glycosylphosphatidylinositol anchor biosynthesis protein 11 (217 aa).

Transmembrane regions (helical) follow at residues Thr45–Asn65 and Asn68–Phe88. N-linked (GlcNAc...) asparagine glycosylation is present at Asn102. The next 4 helical transmembrane spans lie at Ala107–Phe127, Leu134–Tyr154, Tyr169–Asp189, and Ile197–Leu217.

It belongs to the PIGF family.

Its subcellular location is the endoplasmic reticulum membrane. The protein operates within glycolipid biosynthesis; glycosylphosphatidylinositol-anchor biosynthesis. In terms of biological role, acts in the GPI biosynthetic pathway between GlcNAc-PI synthesis and GPI transfer to protein. The protein is Glycosylphosphatidylinositol anchor biosynthesis protein 11 (GPI11) of Candida glabrata (strain ATCC 2001 / BCRC 20586 / JCM 3761 / NBRC 0622 / NRRL Y-65 / CBS 138) (Yeast).